The primary structure comprises 214 residues: Serine protease inhibitor 2.1 (214 aa).

This sequence belongs to the serpin family.

This is Serine protease inhibitor 2.1 from Rattus norvegicus (Rat).